The chain runs to 306 residues: Pantothenate kinase (306 aa).

ATP is bound at residue 91–98 (GSVAVGKS).

This sequence belongs to the prokaryotic pantothenate kinase family.

It localises to the cytoplasm. It carries out the reaction (R)-pantothenate + ATP = (R)-4'-phosphopantothenate + ADP + H(+). It functions in the pathway cofactor biosynthesis; coenzyme A biosynthesis; CoA from (R)-pantothenate: step 1/5. The sequence is that of Pantothenate kinase from Streptococcus agalactiae serotype Ia (strain ATCC 27591 / A909 / CDC SS700).